The primary structure comprises 210 residues: Chorismate pyruvate-lyase (210 aa).

This sequence belongs to the chorismate pyruvate-lyase type 2 family.

The enzyme catalyses chorismate = 4-hydroxybenzoate + pyruvate. In terms of biological role, removes the pyruvyl group from chorismate to provide 4-hydroxybenzoate (4HB). Involved in the synthesis of glycosylated p-hydroxybenzoic acid methyl esters (p-HBADs) and phenolic glycolipids (PGL) that play important roles in the pathogenesis of mycobacterial infections. The sequence is that of Chorismate pyruvate-lyase from Mycobacterium leprae (strain TN).